Here is a 684-residue protein sequence, read N- to C-terminus: Ubinuclein-1 (684 aa).

Disordered stretches follow at residues 108 to 137, 157 to 287, 311 to 332, 609 to 631, and 660 to 684; these read YKGN…FIDD, YVNR…LGKS, NVTG…VKSK, MVDR…CNPT, and PQTR…NLPS. A compositionally biased stretch (acidic residues) spans 114-137; it reads SDGEELDGAPDDDEYDTEDSFIDD. Basic and acidic residues-rich tracts occupy residues 157 to 167 and 184 to 199; these read YVNRGKLERME and SAKP…DKHT. A compositionally biased stretch (polar residues) spans 211-235; that stretch reads STAPGSWKTQESPLPSGAQDANTSV. The span at 238-260 shows a compositional bias: basic and acidic residues; it reads DDVKHSDRANHQSRNDTSHKSRE. Polar residues-rich tracts occupy residues 261 to 284, 311 to 321, 611 to 631, and 669 to 684; these read TGSS…TSLL, NVTGSRQSSQA, DRSN…CNPT, and QNLN…NLPS.

This sequence belongs to the ubinuclein family. As to quaternary structure, component of the HIRA complex made of UBN1, UBN2, ASF1A, CABIN1 and HIRA. Interacts with HIRA.

The protein localises to the nucleus. It localises to the nucleolus. Its function is as follows. May be required for replication-independent chromatin assembly. This Arabidopsis thaliana (Mouse-ear cress) protein is Ubinuclein-1.